A 488-amino-acid polypeptide reads, in one-letter code: Probable glycine dehydrogenase (decarboxylating) subunit 2 (488 aa).

Lysine 264 carries the post-translational modification N6-(pyridoxal phosphate)lysine.

Belongs to the GcvP family. C-terminal subunit subfamily. In terms of assembly, the glycine cleavage system is composed of four proteins: P, T, L and H. In this organism, the P 'protein' is a heterodimer of two subunits. The cofactor is pyridoxal 5'-phosphate.

The enzyme catalyses N(6)-[(R)-lipoyl]-L-lysyl-[glycine-cleavage complex H protein] + glycine + H(+) = N(6)-[(R)-S(8)-aminomethyldihydrolipoyl]-L-lysyl-[glycine-cleavage complex H protein] + CO2. In terms of biological role, the glycine cleavage system catalyzes the degradation of glycine. The P protein binds the alpha-amino group of glycine through its pyridoxal phosphate cofactor; CO(2) is released and the remaining methylamine moiety is then transferred to the lipoamide cofactor of the H protein. The chain is Probable glycine dehydrogenase (decarboxylating) subunit 2 from Methylococcus capsulatus (strain ATCC 33009 / NCIMB 11132 / Bath).